We begin with the raw amino-acid sequence, 417 residues long: MDEVLPLFRDSHIPQIKDYQLELQNDLTKTNEAFQKNLLKNYNKILSLTDSVNDLSLNLKNVDQDFKSLCFNDEKFQLNKLTPLPYQTTTHISPPRDEEKVSIPSQNILVISNWTISINNFCNRIVTSTTPSRIFDELLLNFHELSLIPVPSKFEALVKDKCCRLQKFLVDSMKTLNLTLLQWVKLYNLLNTEFSSKWDDDLLSIFNESLFETLFNDNVQALLISSANSKDHQYHSNQQYKDAIVVDFVNSSTFRDHLIRRTVKEINTHLDTLSTLRAKLKEPETLHKLDIFHDNDTNLNDGTVSPLDDDALKQYIDTAVFYSKGLTNDTTLQIYQTVQPTIEILQNLELYKCPQETLTDLRNKLITQLQEFKTQISSRLPSPLENSTSVVDDFITSYNNHNLLQLVIDQITQLRQQ.

N-acetylmethionine is present on M1. At S305 the chain carries Phosphoserine.

It belongs to the COG1 family. Component of the conserved oligomeric Golgi (COG or Sec34/Sec35) complex which consists of eight different proteins COG1-COG8.

It is found in the golgi apparatus membrane. Functionally, acts as essential component of the peripheral membrane COG complex that is involved in intra-Golgi protein trafficking. COG is located at the cis-Golgi, and regulates tethering of retrograde intra-Golgi vesicles and possibly a number of other membrane trafficking events. The chain is Conserved oligomeric Golgi complex subunit 1 (COG1) from Saccharomyces cerevisiae (strain ATCC 204508 / S288c) (Baker's yeast).